We begin with the raw amino-acid sequence, 413 residues long: Tyrosine--tRNA ligase (413 aa).

The short motif at 60–69 is the 'HIGH' region element; the sequence is PTAPDIHIGH. A 'KMSKS' region motif is present at residues 244–248; sequence KMSKS. Lys247 lines the ATP pocket. Residues 352-412 form the S4 RNA-binding domain; it reads LGIAQLLKQA…GKRRFARVTL (61 aa).

This sequence belongs to the class-I aminoacyl-tRNA synthetase family. TyrS type 2 subfamily. In terms of assembly, homodimer.

The protein localises to the cytoplasm. It carries out the reaction tRNA(Tyr) + L-tyrosine + ATP = L-tyrosyl-tRNA(Tyr) + AMP + diphosphate + H(+). Functionally, catalyzes the attachment of tyrosine to tRNA(Tyr) in a two-step reaction: tyrosine is first activated by ATP to form Tyr-AMP and then transferred to the acceptor end of tRNA(Tyr). The polypeptide is Tyrosine--tRNA ligase (Cupriavidus pinatubonensis (strain JMP 134 / LMG 1197) (Cupriavidus necator (strain JMP 134))).